The primary structure comprises 325 residues: Hydroxymethylglutaryl-CoA lyase, mitochondrial (325 aa).

The N-terminal 27 residues, 1-27, are a transit peptide targeting the mitochondrion; it reads MAAMRKAVPRRLVGLASLRAVSTSSMG. The Pyruvate carboxyltransferase domain occupies 33–300; the sequence is VKIVEVGPRD…HTGVNLQKLL (268 aa). Substrate is bound at residue arginine 41. Aspartate 42 is a binding site for a divalent metal cation. Residue lysine 48 is modified to N6-acetyllysine; alternate. Lysine 48 carries the post-translational modification N6-succinyllysine; alternate. Lysine 111 bears the N6-acetyllysine mark. N6-acetyllysine; alternate is present on residues lysine 137 and lysine 179. Lysine 137 and lysine 179 each carry N6-succinyllysine; alternate. Residues histidine 233 and histidine 235 each coordinate a divalent metal cation. Cysteine 266 is a catalytic residue. Asparagine 275 is an a divalent metal cation binding site. Residues 323 to 325 carry the Microbody targeting signal motif; the sequence is CKL. Lysine 324 bears the N6-acetyllysine mark.

It belongs to the HMG-CoA lyase family. As to quaternary structure, homodimer; disulfide-linked. Can also form homotetramers.

The protein localises to the mitochondrion matrix. Its subcellular location is the peroxisome. The catalysed reaction is (3S)-3-hydroxy-3-methylglutaryl-CoA = acetoacetate + acetyl-CoA. It functions in the pathway metabolic intermediate metabolism; (S)-3-hydroxy-3-methylglutaryl-CoA degradation; acetoacetate from (S)-3-hydroxy-3-methylglutaryl-CoA: step 1/1. Mitochondrial 3-hydroxy-3-methylglutaryl-CoA lyase that catalyzes a cation-dependent cleavage of (S)-3-hydroxy-3-methylglutaryl-CoA into acetyl-CoA and acetoacetate, a key step in ketogenesis. Terminal step in leucine catabolism. Ketone bodies (beta-hydroxybutyrate, acetoacetate and acetone) are essential as an alternative source of energy to glucose, as lipid precursors and as regulators of metabolism. This is Hydroxymethylglutaryl-CoA lyase, mitochondrial (HMGCL) from Pongo abelii (Sumatran orangutan).